Consider the following 901-residue polypeptide: ABC transporter A family member 8 (901 aa).

The next 7 membrane-spanning stretches (helical) occupy residues 34-54, 315-335, 369-389, 402-422, 427-447, 460-477, and 508-528; these read LITIPFFLCLLLLVIQMLFDT, IASLIGPLFFTWVILLLFPVI, FLLISILYMLCFAIFGSLIGL, VFFFICINLQISVAFLASAMF, TATVIAYIYVFGTGLLGIFLF, WIIAMELYPGFSLYRGLY, and CIMLIEWLLLLGLAYYIDQII. The region spanning 586 to 823 is the ABC transporter domain; the sequence is VLCNNLKKVY…YGGSYVLTVT (238 aa). 624-631 contacts ATP; sequence GPNGAGKT.

Belongs to the ABC transporter superfamily. ABCA family. CPR flippase (TC 3.A.1.211) subfamily.

Its subcellular location is the membrane. The chain is ABC transporter A family member 8 (ABCA8) from Arabidopsis thaliana (Mouse-ear cress).